The primary structure comprises 968 residues: RNA polymerase-associated protein RapA (968 aa).

Residues 164–334 (DVGRRHAPRV…FARLRLLDPN (171 aa)) form the Helicase ATP-binding domain. An ATP-binding site is contributed by 177 to 184 (DEVGLGKT). A DEAH box motif is present at residues 280–283 (DEAH). A Helicase C-terminal domain is found at 490 to 644 (RVEWLMGYLT…TCPTGRTIYD (155 aa)).

This sequence belongs to the SNF2/RAD54 helicase family. RapA subfamily. In terms of assembly, interacts with the RNAP. Has a higher affinity for the core RNAP than for the holoenzyme. Its ATPase activity is stimulated by binding to RNAP.

In terms of biological role, transcription regulator that activates transcription by stimulating RNA polymerase (RNAP) recycling in case of stress conditions such as supercoiled DNA or high salt concentrations. Probably acts by releasing the RNAP, when it is trapped or immobilized on tightly supercoiled DNA. Does not activate transcription on linear DNA. Probably not involved in DNA repair. The polypeptide is RNA polymerase-associated protein RapA (Enterobacter sp. (strain 638)).